A 212-amino-acid polypeptide reads, in one-letter code: MSDFAKVEQSLREEMTRIASSFFQRGYATGSAGNLSLLLPDGNLLATPTGSCLGNLDPQRLSKVAADGEWLSGDKPSKEVLFHLALYRNNPRCKAVVHLHSTWSTALSCLQGLDSSNVIRPFTPYVVMRMGNVPLVPYYRPGDKRIAQDLAELAADNQAFLLANHGPVVCGESLQEAANNMEELEETAKLIFILGDRPIRYLTAGEIAELRS.

Glu-79 acts as the Proton acceptor in catalysis. Zn(2+) is bound by residues Glu-79, His-98, and His-100. The Proton donor role is filled by Tyr-125. His-165 contacts Zn(2+).

Belongs to the aldolase class II family. AraD/FucA subfamily. Zn(2+) serves as cofactor.

It catalyses the reaction 3-dehydro-4-O-phospho-D-erythronate + H(+) = dihydroxyacetone phosphate + CO2. It carries out the reaction 3-dehydro-4-O-phospho-L-erythronate + H(+) = dihydroxyacetone phosphate + CO2. Functionally, catalyzes the decarboxylation of 3-oxo-tetronate 4-phosphate to dihydroxyacetone phosphate (DHAP) and CO(2). The sequence is that of 3-oxo-tetronate 4-phosphate decarboxylase from Escherichia coli (strain K12).